The sequence spans 3912 residues: MLREGQGTVAHAPPRPLPHADVLPVSQAQRRLWFLCQLDGASVAYNMPFVTALDGHLDARALQRALDEIIRRHESLRTTFRLQAEGPVQVIHPPAPLDLPLHDLRSLDEPARAAEIQRRIDRAAHQPFDIERGPLLRAQLLRQSETRHVLCLVIHHIVADGWSIGVFVREFEALYGAFSASRPSPLTEPPLQYADFSRWQEERFPPSAVERHLTYWKQKLSDVQPLQLPADHPRPAVESFRGDHTIFRLDRGLTRGLHELAQCEGVTLFITLLSAFNVLLGRYSGQDDLAIASGTANRKHAELEGLIGFFVNTVVIRTDLSGNPTFRTVLSRVLASVMEATEHEDLPFERVVEELKPERTASHNPLAQVALTLQSFASNRLTLPGLTTSPCDFRFRTSKLDLMLLVTEVDGELEVVVEYNTDLFEDATIARMSAHLRTVMAAMVADPGARIGDISLLTTEERHRLLVDWNDTALACPEAEGVHHAFEQNAARQPDAIAVVFDGDPISRITYGALNERANQLAHHLIQQGVGPDVVVGIHVERSITMIVALLAVLKAGGAYLPLDPTYPQQRLAFILADAGAQVILTQEKWFDDLPPHTARVLDLDAIAPQLDANATSNPPLRATADHLAYIIYTSGSTGNPKGVLIPRRDTWSVARALAETYALTPESRVLQFASLNFDGSVVEITMTLFSGAALHVAPQEKLLPGAPLNAFLQRHAITHVQLAPSLLARLPPEGLEHVRTIMVAGEASSVGTVRGWLPGRRILNGYGPTETTVGAAMIAFTEADDAYLAKLDALPIGRPFYNKRVYLLDARLQPVPVGVPGEIYVASPGLARGYINRPAATAEKFLPNPFSETPGERIYRTGDLARYLPDGNLVFLGRVDNQVKLRGLRIELEEIESALKSHPHVGDAAVIVHEAPADQATSERDGKRLVAYVVPRRGWEPEGAQSDHIASWQTLHEQLLDESQAPEDWSFNITGWKSSYTGEALPAAEMRLWVESTVERILAHGPKDVLEIGTGTGLLLARIAPRVRAYLATDFSLEAIRYLETCKARAPELSNVTLLQRMADDFTGFSAGQFDTIVLNSVVQYFPTLDYLSAVIEGALRVLKPGGTLFLGDIRNLALLDAFHASVQTAKASGTLSRDELRYRVQQGVMNENELVIDPRFFTALSRKFPQITHVEVTPKRGLHRNELTLFRYDVALQVGGTPKGAPTITWFDWREEGLTSDSLPPWLSDTLATSPDAGVGLRRVPNARLQPDLAILSWLATRAEASLDAWRARQHDVPEGCAPEALWALETTWPGRVHLSWAAGHPDGSFDLVVTPPQAERRAPWSPAVDLTDEQLSAYVNHPLQAKVVRETLGQELRRYLQDKLPAYMVPTVLIPLPALPLTSNGKLDRRALPAPDIERRSRASTYVAPRNAREETLVAIWSKVLGVDPIGVEDNFFELGGDSILSIQIVGQAKQAGFSLTSRQMFEHQTIAALAEVASASKSIQAEQGLVEGSIPLTPIQRWFFETHQETPDHFNQAILLKVSADVSASRLEQAFHHLFTHHDALRMRFSRTADGFEQVNLGPIEGVTVDVIDLAHLPAAEQTRALTEAATSLQQRLSITSGPLSRIALIHLGAEQPARLLWILHHLVVDGVSWRILLDDLVTVLRQLEAGQPARFPPKTTSFKEWSERLHATAQQEQANTASSRAERDAWRSVPVPALPLDHPQGTNRKASAAQVQVALSVADTHALLHDAPRAYGTQVNDLLLTALALAFNAWTGDATLALDLEGHGREEDLVGADLSRTVGWFTTMHPVALRLPGRELSLALRAVKEQLRAQPGRGIAYGLFRYASGEGSLASWPAPQVNFNYLGQLDAMTDTAPLLGFAPEEIGPSDGPTGDRTHLFQVNGMVKDGSLQFTWTYSRELHRPETVQKLAHDFAETARRLTQHCLAHESHPTPGDFPAVTLSQNQLDVVLDALGADRDNVAAIYPLTSLQEGLLFHSLSAVPAPVPALADEDDEEDDELDEEFDAEVDEEDEDEEEEEDDDGENVYVTQLVFRIQGPLDAEKFRTAWQETVQRHPLLRSRFVWEGCERPLQVVLRSADLRWEEDELEEDSWSSPLRVHARREQQAGMLLDEAPLFRLNLLRAEDTEHHLIWTSHHILLDGWSGPLILKDVFASYDAQLLGESRTAADPPPYEAYVAWLKRQDGTASERFWRENLRGFSAPTPLVVDNEEPTGKQKHLHHRCKLSAETSQALKALAESFRVTLSTVYQAAWALLLHRYSGMSDVLFGVTVSGREADVPGIEEMVGLFIRTVPLRLHVDESQTLGAWLKEVQARQIEQREHQYVSLVDIQRWSDVPGGTQLFDSMFVFENYPLDSALLEQSGLRLTVSTMASPTHYPLVIAVVPGRTVETLFDHDTSRLSKHTVERLAAHWVELLTGMARRPDARIHTLPHLTSAEREKLLVTWNARPYVDEQRKYRGEEEPFGEELAAESTFLDLFQHHVAQTPDALALVGPSLQSTDERPVSRTYRALSARVHLLARHLRGLGVGPEVTVGVCLDRSIELVIGMLAIFEAGGVYLPLDPSQPLERLAYLVSDARPEVVLTQQRWNDRLPEQATRRVALDTAWAEIEAQPEVSHQHRTAGDNLAYVLYTSGSTGTPKGVQVTVDNLSRLTPALITAFDVTPRSRVLQYSSLSFDGSISEVAMALGAGAALHLAPAHELVPGPPLQKLLATRAITHVTLLPAALRWLSPRGLPALDVLIVTGEACPASLVRTWASGRRFVNAYGPTEITVAATAMECPVTMFQETEQPPPIGCPLQSTEIYILDAHLRPVPVGVPGDLYIGGAKLTRGYIHRPALTAERYIPHPFSDRPGARLYVTGDIARYQLDGTIDFLGRRDNQVKVRGYRIELGEVEAALNDHPGVREAVVVAQKDGAGDNRLVAYWAAKSTPPTTTEALRDALSKRLAAYMIPSVFVRMDALPLNATGKIDRQGLPPVDDTMLDREQFVAPRTATEETLTAIWSSTLGVARVGIRDDFFKLGGHSLLALNITTQIQKRFGHVITVDSIFRAPTIAVLARVIDEALAPTGARRALSLVVPLRERGTKVPLFFAAGMGMHAHYLRPLAEHLGEDQPFYALQSPAQGGEITDMATLVDTLIGAIQQIQPSGPYHLGGHSAGARIAFAVALELQRRGAEVPLVSIVDMRPPGRGATSDESAEWTQIGGLIGYVTMIKQAIGEGVLFVTPEELRKLDEAAAWQRTLDAFIAARWMPKDADVEQLQHLCAMNQNVVRVVRDHVPTDTHQGKLLVFSAAFAMRNGRQVSTEGWQAFCANPVTTHEVPGDHMTMLREPDVRGLAIKLRREIDELALERTDEAPGLPTPPEFPVVWEHPEDARMLWVHDVTHCREQMTPLDFCLRQQAMVEGSNLANLAYGVPFTGEIRLINTYVYQKIIPTTASPTELAAAMKRAEASVAALLPDLGRWWTETLLPEIEAHLEALDPENNYDFVHRHTLVEALAEAHRRTARLWEIHFRLLQPVMLAISRFVDLCKDLSTDDDPIDPYALLVGFPNKTTEGNRALWSLSRLALETPEVASILTSNEASRVSWKLRSTRGGRAFVAQLDAYLATYGQRNDSTYLDAPTWEEDPTPVIRNLQAYMTQPERDLDAELNALSEQRTQRLDALRARLRHYPRAVVDEFEQALTAAQTATVLSEDHNYWIDYKITHRLRHLCLYLGEQLKDWELLGDCEEIFYLSMDDVSRAAVETKRGGPFSANQRFYHLACARKDEAKRFHGVQPPRFLGTPSPLPALHDALSLASARFTGVAPSPSNDEKEIVGLSGAKGKARGKARVARNLADVPTLEPGEILVAMAMLPAWTPLFATVAAIVTDSGGMLSHAAVVAREYGIPAVVGTQVGTQRIRDGQLVEVDGERGVVTLL.

Residues 1411–1485 (APRNAREETL…ALAEVASASK (75 aa)) enclose the Carrier 1 domain. S1446 is modified (O-(pantetheine 4'-phosphoryl)serine). Over residues 1995-2029 (ADEDDEEDDELDEEFDAEVDEEDEDEEEEEDDDGE) the composition is skewed to acidic residues. The disordered stretch occupies residues 1995 to 2030 (ADEDDEEDDELDEEFDAEVDEEDEDEEEEEDDDGEN). The 76-residue stretch at 2989-3064 (APRTATEETL…VLARVIDEAL (76 aa)) folds into the Carrier 2 domain. Residue S3024 is modified to O-(pantetheine 4'-phosphoryl)serine.

This sequence belongs to the ATP-dependent AMP-binding enzyme family. The cofactor is pantetheine 4'-phosphate.

Its function is as follows. Involved in the synthesis of chondramides. Activates R-beta-tyrosine and probably phenylalanine. The chain is Chondramide synthase cmdD from Chondromyces crocatus.